The chain runs to 409 residues: Putative protein disulfide-isomerase DDB_G0275025 (409 aa).

The N-terminal stretch at 1-21 (MKLINICIFIFAIICIESTFG) is a signal peptide. The Thioredoxin domain maps to 28 to 140 (NVINLTKKNF…AKFSLAKLPS (113 aa)). A disulfide bridge links Cys57 with Cys60. The disordered stretch occupies residues 245-273 (SNNDNNNNNNNNNNEESTKTTTTEKDPAS). The segment covering 247–259 (NDNNNNNNNNNNE) has biased composition (low complexity). Positions 260–273 (ESTKTTTTEKDPAS) are enriched in basic and acidic residues. Residues 406 to 409 (KDEL) carry the Prevents secretion from ER motif.

Belongs to the protein disulfide isomerase family.

It is found in the endoplasmic reticulum lumen. The enzyme catalyses Catalyzes the rearrangement of -S-S- bonds in proteins.. The polypeptide is Putative protein disulfide-isomerase DDB_G0275025 (Dictyostelium discoideum (Social amoeba)).